A 341-amino-acid chain; its full sequence is Tryptophan--tRNA ligase (341 aa).

Residues 11 to 13 and 19 to 20 each bind ATP; these read RPT and GH. Residues 12–20 carry the 'HIGH' region motif; that stretch reads PTGKLHIGH. L-tryptophan is bound at residue D140. ATP-binding positions include 152–154, L193, and 201–205; these read GED and KMSKS. The 'KMSKS' region signature appears at 201–205; that stretch reads KMSKS.

It belongs to the class-I aminoacyl-tRNA synthetase family. In terms of assembly, homodimer.

Its subcellular location is the cytoplasm. The catalysed reaction is tRNA(Trp) + L-tryptophan + ATP = L-tryptophyl-tRNA(Trp) + AMP + diphosphate + H(+). In terms of biological role, catalyzes the attachment of tryptophan to tRNA(Trp). This chain is Tryptophan--tRNA ligase, found in Clostridium longisporum.